A 413-amino-acid polypeptide reads, in one-letter code: MLSQRSQRNTSEIIPRLLREYHQPQAGNIDILDLSQAENSVLRDETLDEIRSAIGKHLNGSNLSYPTGVGGELAARKSLAMFFNDRFNPARSVSPDHIVMTPGASEALETLIFHICDPGEGVLIAAPYWSGLDLALETRSLARIVQVNIPLHEFFEMSSIQYYERALATSPIPIKAILMCNPHNPLGQCYNADVLEGLLGFCQRNKLHYISDEVYGMSVFSDSDKGVTPAFTSILSHATAPGLTSWVHMVYSLSKDFGCSGLRLGAIVTQGNTDLLLGSALITNNKVSSLTSVIVPSLLEPRTTQKLLNQNLRSRLNLNYGKVQRFLENRGLEFVPAKAGLFVFACLGKTRTEKEQLLLIECMKRSGVKLVAGTSFHFEQFCWFRIMFSLPKNIVDVALQRIGDALDETEKLL.

Position 255 is an N6-(pyridoxal phosphate)lysine (lysine 255).

Belongs to the class-I pyridoxal-phosphate-dependent aminotransferase family. It depends on pyridoxal 5'-phosphate as a cofactor.

It functions in the pathway mycotoxin biosynthesis. Probable aminotransferase; part of the gene cluster that mediates the biosynthesis of sirodesmin PL, an epipolythiodioxopiperazine (ETP) characterized by a disulfide bridged cyclic dipeptide and that acts as a phytotoxin which is involved in the blackleg didease of canola. SirD catalyzes the O-prenylation of L-tyrosine (L-Tyr) in the presence of dimethylallyl diphosphate (DMAPP) to yield 4-O-dimethylallyl-L-Tyr, and therefore represents probably the first pathway-specific enzyme in the biosynthesis of sirodesmin PL. 4-O-dimethylallyl-L-Tyr, then undergoes condensation with L-Ser in a reaction catalyzed by the non-ribosomal peptide synthase sirP to form the diketopiperazine (DKP) backbone. Further bishydroxylation of the DKP performed by the cytochrome P450 monooxygenase sirC leads to the production of the intermediate phomamide. This step is essential to form the reactive thiol group required for toxicity of sirodesmin PL. The next steps of sirodesmin biosynthesis are not well understood yet, but some predictions could be made from intermediate compounds identification. Phomamide is converted into phomalizarine via oxidation, probably by sirT. Further oxidation, methylation (by sirM or sirN) and reduction steps convert phomalizarine to deacetyl sirodesmin. Finally, acetyltransferase sirH probably acetylates deacetyl sirodesmin to produce sirodesmin PL. In Leptosphaeria maculans (Blackleg fungus), this protein is Probable aminotransferase sirI.